The sequence spans 198 residues: Pyridoxal 5'-phosphate synthase subunit PdxT (198 aa).

Position 52 to 54 (52 to 54 (GES)) interacts with L-glutamine. C84 acts as the Nucleophile in catalysis. L-glutamine is bound by residues R115 and 142–143 (IR). Active-site charge relay system residues include H178 and E180.

The protein belongs to the glutaminase PdxT/SNO family. In terms of assembly, in the presence of PdxS, forms a dodecamer of heterodimers. Only shows activity in the heterodimer.

The enzyme catalyses aldehydo-D-ribose 5-phosphate + D-glyceraldehyde 3-phosphate + L-glutamine = pyridoxal 5'-phosphate + L-glutamate + phosphate + 3 H2O + H(+). It catalyses the reaction L-glutamine + H2O = L-glutamate + NH4(+). Its pathway is cofactor biosynthesis; pyridoxal 5'-phosphate biosynthesis. In terms of biological role, catalyzes the hydrolysis of glutamine to glutamate and ammonia as part of the biosynthesis of pyridoxal 5'-phosphate. The resulting ammonia molecule is channeled to the active site of PdxS. This Archaeoglobus fulgidus (strain ATCC 49558 / DSM 4304 / JCM 9628 / NBRC 100126 / VC-16) protein is Pyridoxal 5'-phosphate synthase subunit PdxT.